The primary structure comprises 553 residues: Ergothioneine transport permease/ergothioneine binding protein EgtU (553 aa).

The ABC transmembrane type-1 domain occupies 57-236; sequence LAQHFIIVAL…LFSVLADKFV (180 aa). The next 6 membrane-spanning stretches (helical) occupy residues 61-81, 98-118, 122-142, 182-202, 219-239, and 261-281; these read FIIVALSGFLVLVFGVLIGVF, FLYTIPSLALFALFIPVIGVG, ALLVLVLYGLLPIVYSTYNAL, IAVVMLVAMAGIGALIGAGGL, VAGSLIIALFSVLADKFVSVF, and VYTNLAVFLFLLLASALWLIP. The Periplasmic segment spans residues 282 to 553; sequence RNAIEEKPLV…AKDFLERLGL (272 aa). Positions 288 to 549 are ergothioneine binding domain; sequence KPLVVATKPS…PKIVAKDFLE (262 aa).

It in the N-terminal section; belongs to the binding-protein-dependent transport system permease family. The protein in the C-terminal section; belongs to the OsmX family. As to quaternary structure, the complex is composed of two ATP-binding proteins (EgtV) and two transmembrane proteins (EgtU).

The protein localises to the cell inner membrane. Functionally, part of the ABC transporter complex EgtUV involved in the uptake of ergothioneine (EGT), a natural low-molecular weight (LMW) thiol antioxidant which protects H.pylori against bleach stress. Responsible for the translocation of the substrate across the membrane. Also contains a C-terminal periplasmic solute-binding domain (SBD) which binds to ergothioneine with low-micromolar affinity. Cannot bind the structurally similar compounds glycine betaine, choline, proline, carnitine or histidine. The chain is Ergothioneine transport permease/ergothioneine binding protein EgtU from Helicobacter pylori (strain G27).